Consider the following 586-residue polypeptide: Phosphomethylpyrimidine synthase (586 aa).

A disordered region spans residues 1-59 (MKQSVSAEQIELKSSLPGSKKVYVDGPREGMKVPMREIEQSDTNGVPNPPIRVYDTSGP). Basic and acidic residues predominate over residues 22–39 (VYVDGPREGMKVPMREIE). Substrate contacts are provided by residues Asn-193, Met-222, Tyr-251, His-287, 307–309 (SRG), 348–351 (DGLR), and Glu-387. Position 391 (His-391) interacts with Zn(2+). Tyr-414 contacts substrate. His-455 is a binding site for Zn(2+). [4Fe-4S] cluster-binding residues include Cys-535, Cys-538, and Cys-543.

This sequence belongs to the ThiC family. Requires [4Fe-4S] cluster as cofactor.

It catalyses the reaction 5-amino-1-(5-phospho-beta-D-ribosyl)imidazole + S-adenosyl-L-methionine = 4-amino-2-methyl-5-(phosphooxymethyl)pyrimidine + CO + 5'-deoxyadenosine + formate + L-methionine + 3 H(+). It functions in the pathway cofactor biosynthesis; thiamine diphosphate biosynthesis. Its function is as follows. Catalyzes the synthesis of the hydroxymethylpyrimidine phosphate (HMP-P) moiety of thiamine from aminoimidazole ribotide (AIR) in a radical S-adenosyl-L-methionine (SAM)-dependent reaction. The chain is Phosphomethylpyrimidine synthase from Bacillus cereus (strain Q1).